The chain runs to 663 residues: Cytochrome bo(3) ubiquinol oxidase subunit 1 (663 aa).

Over 1–16 (MFGKLSLDAVPFHEPI) the chain is Periplasmic. A helical transmembrane segment spans residues 17 to 35 (VMVTIAGIILGGLALVGLI). Residues 36 to 52 (TYFGKWTYLWKEWLTSV) lie on the Cytoplasmic side of the membrane. Residues 53–80 (DHKRLGIMYIIVAIVMLLRGFADAIMMR) traverse the membrane as a helical segment. Ubiquinone-8 is bound by residues arginine 71 and aspartate 75. The Periplasmic segment spans residues 81–95 (SQQALASAGEAGFLP). Residues 96–132 (PHHYDQIFTAHGVIMIFFVAMPFVIGLMNLVVPLQIG) form a helical membrane-spanning segment. Residue histidine 98 participates in ubiquinone-8 binding. Residue histidine 106 coordinates heme b. Topologically, residues 133–137 (ARDVA) are cytoplasmic. Residues 138 to 161 (FPFLNNLSFWFTVVGVILVNVSLG) traverse the membrane as a helical segment. Residues 162 to 184 (VGEFAQTGWLAYPPLSGIEYSPG) lie on the Periplasmic side of the membrane. A heme b-binding site is contributed by tryptophan 170. A helical membrane pass occupies residues 185 to 215 (VGVDYWIWSLQLSGIGTTLTGINFFVTILKM). Topologically, residues 216–224 (RAPGMTMFK) are cytoplasmic. Residues 225 to 260 (MPVFTWASLCANVLIIASFPILTVTVALLTLDRYLG) traverse the membrane as a helical segment. Residues 261–270 (THFFTNDMGG) are Periplasmic-facing. A helical membrane pass occupies residues 271–307 (NMMMYINLIWAWGHPEVYILILPVFGVFSEIAATFSR). Histidine 284 provides a ligand contact to Cu(2+). A cross-link (1'-histidyl-3'-tyrosine (His-Tyr)) is located at residues 284–288 (HPEVY). Tyrosine 288 contributes to the Fe(II)-heme o binding site. Topologically, residues 308-311 (KRLF) are cytoplasmic. The helical transmembrane segment at 312–326 (GYTSLVWATVCITVL) threads the bilayer. The Periplasmic portion of the chain corresponds to 327–340 (SFIVWLHHFFTMGA). 2 residues coordinate Cu(2+): histidine 333 and histidine 334. A helical transmembrane segment spans residues 341–369 (GANVNAFFGITTMIIAIPTGVKIFNWLFT). At 370–377 (MYQGRIVF) the chain is on the cytoplasmic side. Residues 378–409 (HSAMLWTIGFIVTFSVGGMTGVLLAVPGADFV) traverse the membrane as a helical segment. The Periplasmic segment spans residues 410–412 (LHN). Histidine 411 and histidine 419 together coordinate Fe(II)-heme o. A helical membrane pass occupies residues 413 to 445 (SLFLIAHFHNVIIGGVVFGCFAGMTYWWPKAFG). Histidine 421 contributes to the heme b binding site. The Cytoplasmic portion of the chain corresponds to 446 to 448 (FKL). The helical transmembrane segment at 449–477 (NETWGKRAFWFWIIGFFVAFMPLYALGFM) threads the bilayer. Residues 478–489 (GMTRRLSQQIDP) lie on the Periplasmic side of the membrane. Positions 481 and 482 each coordinate heme b. The chain crosses the membrane as a helical span at residues 490-521 (QFHTMLMIAASGAVLIALGILCLVIQMYVSIR). Topologically, residues 522-587 (DRDQNRDLTG…DHYEEIHMPK (66 aa)) are cytoplasmic. Residues 588-606 (NSGAGIVIAAFSTIFGFAM) form a helical membrane-spanning segment. The Periplasmic portion of the chain corresponds to 607–613 (IWHIWWL). Residues 614 to 632 (AIVGFAGMIITWIVKSFDE) form a helical membrane-spanning segment. The Cytoplasmic segment spans residues 633–663 (DVDYYVPVAEIEKLENQHFDEITKAGLKNGN).

The protein belongs to the heme-copper respiratory oxidase family. As to quaternary structure, the cytochrome bo(3) ubiquinol oxidase complex is a heterooctamer of two A chains, two B chains, two C chains and two D chains. Cu(2+) is required as a cofactor. The cofactor is heme b. Fe(II)-heme o serves as cofactor.

It localises to the cell inner membrane. It catalyses the reaction 2 a ubiquinol + O2 + n H(+)(in) = 2 a ubiquinone + 2 H2O + n H(+)(out). Its function is as follows. Cytochrome bo(3) ubiquinol oxidase is the terminal enzyme in the aerobic respiratory chain of E.coli that predominates when cells are grown at high aeration. Catalyzes the four-electron reduction of O2 to water, using a ubiquinol as a membrane soluble electron donor for molecular oxygen reduction; ubiquinol-8 is the natural substrate for E.coli. Has proton pump activity across the membrane in addition to electron transfer, pumping 2 protons/electron and generating a proton motive force. All the redox centers of this enzyme complex are located within the largest subunit, subunit I. Protons are probably pumped via D- and K- channels found in this subunit. The chain is Cytochrome bo(3) ubiquinol oxidase subunit 1 (cyoB) from Escherichia coli O157:H7.